Consider the following 222-residue polypeptide: N-(5'-phosphoribosyl)anthranilate isomerase (222 aa).

Belongs to the TrpF family.

The enzyme catalyses N-(5-phospho-beta-D-ribosyl)anthranilate = 1-(2-carboxyphenylamino)-1-deoxy-D-ribulose 5-phosphate. It participates in amino-acid biosynthesis; L-tryptophan biosynthesis; L-tryptophan from chorismate: step 3/5. The protein is N-(5'-phosphoribosyl)anthranilate isomerase of Rhizobium etli (strain ATCC 51251 / DSM 11541 / JCM 21823 / NBRC 15573 / CFN 42).